A 386-amino-acid chain; its full sequence is L-prolyl-[peptidyl-carrier protein] dehydrogenase (386 aa).

FAD is bound by residues 125 to 134 and 158 to 160; these read NAATEPDAGS and FIT. Catalysis depends on glutamate 244, which acts as the Proton acceptor. FAD is bound by residues arginine 270, glutamine 281, 338 to 342, and 367 to 369; these read QTFGG and TND.

This sequence belongs to the acyl-CoA dehydrogenase family. The cofactor is FAD.

It carries out the reaction L-prolyl-[peptidyl-carrier protein] + 2 oxidized [electron-transfer flavoprotein] + H(+) = (1H-pyrrole-2-carbonyl)-[peptidyl-carrier protein] + 2 reduced [electron-transfer flavoprotein]. It functions in the pathway antibiotic biosynthesis; prodigiosin biosynthesis. Functionally, involved in the biosynthesis of 4-methoxy-2,2'-bipyrrole-5-carbaldehyde (MBC), one of the terminal products involved in the biosynthesis of the red antibiotic prodigiosin (Pig). Catalyzes the desaturation of the L-prolyl-[PigG] to yield 1H-pyrrole-2-carbonyl-[PigG]. The protein is L-prolyl-[peptidyl-carrier protein] dehydrogenase of Serratia sp. (strain ATCC 39006) (Prodigiosinella confusarubida).